A 321-amino-acid polypeptide reads, in one-letter code: Olfactory receptor 5K4 (321 aa).

Residues 1 to 25 (MARENHSLAAEFILIGFTNYPELKT) lie on the Extracellular side of the membrane. Asparagine 5 carries N-linked (GlcNAc...) asparagine glycosylation. Residues 26–46 (LLFVVFSAIYLVTMVGNLGLV) traverse the membrane as a helical segment. Residues 47–54 (ALIYVERR) lie on the Cytoplasmic side of the membrane. A helical transmembrane segment spans residues 55–75 (LLTPMYIFLGNLALMDSCCSC). The Extracellular segment spans residues 76–97 (AVTPKMLENFFSEDRIISLYEC). Residues cysteine 97 and cysteine 179 are joined by a disulfide bond. The chain crosses the membrane as a helical span at residues 98–118 (MAQFYFLCLAETTDCFLLATM). At 119-139 (AYDRYVAICHPLQYHTMMSKT) the chain is on the cytoplasmic side. A helical membrane pass occupies residues 140-160 (LCIRMTTGAFKAGNLHSMIHV). At 161-205 (GLLLRLTFCRSNKIHHFFCDILPLYRLSCTDPSINELMIYIFSIP) the chain is on the extracellular side. The helical transmembrane segment at 206 to 226 (IQIFTIATVLISYLCILLTVF) threads the bilayer. Residues 227–240 (KMKSKEGRGKAFST) lie on the Cytoplasmic side of the membrane. The helical transmembrane segment at 241-261 (CASHFLSVSIFYICLLMYIGP) threads the bilayer. Over 262–268 (SEEGDKD) the chain is Extracellular. Residues 269-289 (TPVAIFYAIVIPLLNPFIYSL) traverse the membrane as a helical segment. At 290–321 (RNKEVINVLKKIMRNYNILKQTCSIANLFLIY) the chain is on the cytoplasmic side.

Belongs to the G-protein coupled receptor 1 family.

The protein localises to the cell membrane. Its function is as follows. Odorant receptor. The protein is Olfactory receptor 5K4 (OR5K4) of Homo sapiens (Human).